Reading from the N-terminus, the 156-residue chain is uncharacterized protein (156 aa).

H55 is an active-site residue.

This sequence belongs to the thioester dehydratase family. FabZ subfamily.

This is an uncharacterized protein from Halalkalibacterium halodurans (strain ATCC BAA-125 / DSM 18197 / FERM 7344 / JCM 9153 / C-125) (Bacillus halodurans).